A 144-amino-acid polypeptide reads, in one-letter code: Large ribosomal subunit protein uL16 (144 aa).

Belongs to the universal ribosomal protein uL16 family. As to quaternary structure, part of the 50S ribosomal subunit.

Its function is as follows. Binds 23S rRNA and is also seen to make contacts with the A and possibly P site tRNAs. This Latilactobacillus sakei subsp. sakei (strain 23K) (Lactobacillus sakei subsp. sakei) protein is Large ribosomal subunit protein uL16.